The primary structure comprises 48 residues: Glycine-rich RNA-binding protein 3 (48 aa).

This is Glycine-rich RNA-binding protein 3 from Populus euphratica (Euphrates poplar).